The primary structure comprises 258 residues: Indole-3-glycerol phosphate synthase (258 aa).

It belongs to the TrpC family.

The enzyme catalyses 1-(2-carboxyphenylamino)-1-deoxy-D-ribulose 5-phosphate + H(+) = (1S,2R)-1-C-(indol-3-yl)glycerol 3-phosphate + CO2 + H2O. The protein operates within amino-acid biosynthesis; L-tryptophan biosynthesis; L-tryptophan from chorismate: step 4/5. The chain is Indole-3-glycerol phosphate synthase from Geobacillus sp. (strain WCH70).